We begin with the raw amino-acid sequence, 381 residues long: UDP-N-acetylglucosamine--N-acetylmuramyl-(pentapeptide) pyrophosphoryl-undecaprenol N-acetylglucosamine transferase (381 aa).

UDP-N-acetyl-alpha-D-glucosamine-binding positions include 10-12 (TGG), asparagine 124, arginine 165, serine 190, isoleucine 245, and glutamine 290. Residues 361-381 (WGSPAGQERPGHGPVRPPDLA) form a disordered region.

This sequence belongs to the glycosyltransferase 28 family. MurG subfamily.

Its subcellular location is the cell inner membrane. The catalysed reaction is di-trans,octa-cis-undecaprenyl diphospho-N-acetyl-alpha-D-muramoyl-L-alanyl-D-glutamyl-meso-2,6-diaminopimeloyl-D-alanyl-D-alanine + UDP-N-acetyl-alpha-D-glucosamine = di-trans,octa-cis-undecaprenyl diphospho-[N-acetyl-alpha-D-glucosaminyl-(1-&gt;4)]-N-acetyl-alpha-D-muramoyl-L-alanyl-D-glutamyl-meso-2,6-diaminopimeloyl-D-alanyl-D-alanine + UDP + H(+). The protein operates within cell wall biogenesis; peptidoglycan biosynthesis. Its function is as follows. Cell wall formation. Catalyzes the transfer of a GlcNAc subunit on undecaprenyl-pyrophosphoryl-MurNAc-pentapeptide (lipid intermediate I) to form undecaprenyl-pyrophosphoryl-MurNAc-(pentapeptide)GlcNAc (lipid intermediate II). The polypeptide is UDP-N-acetylglucosamine--N-acetylmuramyl-(pentapeptide) pyrophosphoryl-undecaprenol N-acetylglucosamine transferase (Anaeromyxobacter sp. (strain Fw109-5)).